Consider the following 370-residue polypeptide: Asporin (370 aa).

The N-terminal stretch at 1-15 (MKVYVLLVFLTLCSA) is a signal peptide. O-linked (GalNAc...) serine glycosylation occurs at serine 45. An LRRNT domain is found at 56 to 92 (FFPFDLFSTCPFGCQCYSRVVHCSDLGLSSVPSNIPF). Cystine bridges form between cysteine 65-cysteine 71 and cysteine 69-cysteine 78. LRR repeat units follow at residues 93-114 (DTRMVDLQNNKIKEIKENDFKG), 117-138 (SLYALILNNNKLTKIHPKAFLT), 141-163 (KLRRLYLSHNQLSEIPLNLPKSL), 164-183 (AELRIHDNKVKKIQKATFKG), 186-209 (ALHVLEMSANPLDNNGIEPGAFEG), 232-253 (TLLELHLDYNKISVVELEDFKR), 256-277 (DLQRLGLGNNRITDIENGSLAN), 280-302 (RVREIHLENNKLKKVPSGLQELK), 303-324 (YLQIIFLHSNSITKVGVNDFCP), 332-354 (SLYSAISLSNNPVKYWEVQPATF), and 355-370 (RCVLSRMSVQLGNFRK). N-linked (GlcNAc...) asparagine glycosylation occurs at asparagine 272. A disulfide bridge links cysteine 323 with cysteine 356.

It belongs to the small leucine-rich proteoglycan (SLRP) family. SLRP class I subfamily.

The protein localises to the secreted. The protein resides in the extracellular space. Its subcellular location is the extracellular matrix. The sequence is that of Asporin (ASPN) from Bos taurus (Bovine).